The chain runs to 284 residues: Diaminopimelate epimerase (284 aa).

Positions 13 and 66 each coordinate substrate. Cys75 functions as the Proton donor in the catalytic mechanism. Substrate contacts are provided by residues Gly76 to Asn77, Asn166, Asn199, and Glu217 to Arg218. Cys226 acts as the Proton acceptor in catalysis. A substrate-binding site is contributed by Gly227 to Thr228.

This sequence belongs to the diaminopimelate epimerase family. Homodimer.

It is found in the cytoplasm. It carries out the reaction (2S,6S)-2,6-diaminopimelate = meso-2,6-diaminopimelate. It participates in amino-acid biosynthesis; L-lysine biosynthesis via DAP pathway; DL-2,6-diaminopimelate from LL-2,6-diaminopimelate: step 1/1. Catalyzes the stereoinversion of LL-2,6-diaminopimelate (L,L-DAP) to meso-diaminopimelate (meso-DAP), a precursor of L-lysine and an essential component of the bacterial peptidoglycan. The chain is Diaminopimelate epimerase from Halothermothrix orenii (strain H 168 / OCM 544 / DSM 9562).